The chain runs to 322 residues: uncharacterized protein (322 aa).

A coiled-coil region spans residues 205–286 (QEIKNAHAAL…LKKAISEAVQ (82 aa)). Composition is skewed to basic and acidic residues over residues 254–281 (EKEEELNKKDKEKEEETEKEGEKLKKAI) and 290–299 (DRIEAIEKSR). Positions 254-322 (EKEEELNKKD…VQKSIWSGLF (69 aa)) are disordered. The segment covering 310-322 (SEQVQKSIWSGLF) has biased composition (polar residues).

The protein to B.subtilis XkdF.

This is an uncharacterized protein from Bacillus subtilis (strain 168).